Reading from the N-terminus, the 450-residue chain is Phosphoglucosamine mutase (450 aa).

The active-site Phosphoserine intermediate is Ser101. Positions 101, 241, 243, and 245 each coordinate Mg(2+). The residue at position 101 (Ser101) is a Phosphoserine.

Belongs to the phosphohexose mutase family. Mg(2+) serves as cofactor. Post-translationally, activated by phosphorylation.

The catalysed reaction is alpha-D-glucosamine 1-phosphate = D-glucosamine 6-phosphate. Functionally, catalyzes the conversion of glucosamine-6-phosphate to glucosamine-1-phosphate. This Listeria innocua serovar 6a (strain ATCC BAA-680 / CLIP 11262) protein is Phosphoglucosamine mutase.